Consider the following 135-residue polypeptide: Large ribosomal subunit protein uL16c (135 aa).

This sequence belongs to the universal ribosomal protein uL16 family. As to quaternary structure, part of the 50S ribosomal subunit.

It localises to the plastid. The protein resides in the chloroplast. This is Large ribosomal subunit protein uL16c from Aethionema cordifolium (Lebanon stonecress).